Consider the following 316-residue polypeptide: Pantothenate kinase (316 aa).

95-102 serves as a coordination point for ATP; the sequence is GSVAVGKS.

It belongs to the prokaryotic pantothenate kinase family.

Its subcellular location is the cytoplasm. The enzyme catalyses (R)-pantothenate + ATP = (R)-4'-phosphopantothenate + ADP + H(+). It participates in cofactor biosynthesis; coenzyme A biosynthesis; CoA from (R)-pantothenate: step 1/5. The protein is Pantothenate kinase of Shewanella loihica (strain ATCC BAA-1088 / PV-4).